Reading from the N-terminus, the 245-residue chain is tRNA pseudouridine synthase A (245 aa).

Asp52 acts as the Nucleophile in catalysis. Position 111 (Tyr111) interacts with substrate.

It belongs to the tRNA pseudouridine synthase TruA family. As to quaternary structure, homodimer.

The catalysed reaction is uridine(38/39/40) in tRNA = pseudouridine(38/39/40) in tRNA. Functionally, formation of pseudouridine at positions 38, 39 and 40 in the anticodon stem and loop of transfer RNAs. The polypeptide is tRNA pseudouridine synthase A (Rickettsia peacockii (strain Rustic)).